Consider the following 357-residue polypeptide: DNA polymerase IV (357 aa).

One can recognise a UmuC domain in the interval 4 to 185 (IIHVDMDCYF…LSLRQIPGVG (182 aa)). Asp-8 and Asp-103 together coordinate Mg(2+). Glu-104 is an active-site residue.

It belongs to the DNA polymerase type-Y family. Monomer. Mg(2+) serves as cofactor.

Its subcellular location is the cytoplasm. It carries out the reaction DNA(n) + a 2'-deoxyribonucleoside 5'-triphosphate = DNA(n+1) + diphosphate. Its function is as follows. Poorly processive, error-prone DNA polymerase involved in untargeted mutagenesis. Copies undamaged DNA at stalled replication forks, which arise in vivo from mismatched or misaligned primer ends. These misaligned primers can be extended by PolIV. Exhibits no 3'-5' exonuclease (proofreading) activity. May be involved in translesional synthesis, in conjunction with the beta clamp from PolIII. The protein is DNA polymerase IV of Shewanella oneidensis (strain ATCC 700550 / JCM 31522 / CIP 106686 / LMG 19005 / NCIMB 14063 / MR-1).